Consider the following 559-residue polypeptide: NAD-dependent histone deacetylase SIR2 (559 aa).

Residues 1 to 73 are disordered; it reads MSESASMLQG…NDHSAQEVAG (73 aa). Basic and acidic residues predominate over residues 39-51; it reads NDEKELLEATKAD. Acidic residues predominate over residues 52 to 62; the sequence is ELDEVVDDYAE. The 292-residue stretch at 223 to 514 folds into the Deacetylase sirtuin-type domain; sequence RLANFFTLDH…AFIAQKCGWD (292 aa). NAD(+) contacts are provided by residues 248-267 and 330-333; these read GAGI…KGFY and QNID. H350 serves as the catalytic Proton acceptor. Zn(2+)-binding residues include C358, C361, C382, and C385. Residues 458-460, 483-485, and C500 each bind NAD(+); these read GTS and NRD.

This sequence belongs to the sirtuin family. Class I subfamily. Zn(2+) serves as cofactor.

It is found in the nucleus. The catalysed reaction is N(6)-acetyl-L-lysyl-[protein] + NAD(+) + H2O = 2''-O-acetyl-ADP-D-ribose + nicotinamide + L-lysyl-[protein]. In terms of biological role, NAD-dependent deacetylase. Heterochromatin component that silences transcription at silent mating loci, telomeres and the ribosomal DNA, and that also suppresses recombination in the rDNA and extends replicative life span. It acts as a NAD-dependent histone deacetylase, which deacetylates 'Lys-9' and 'Lys-14' of Histone H3 and 'Lys-16' of Histone H4. In Eremothecium gossypii (strain ATCC 10895 / CBS 109.51 / FGSC 9923 / NRRL Y-1056) (Yeast), this protein is NAD-dependent histone deacetylase SIR2 (SIR2).